Consider the following 1358-residue polypeptide: Phosphoinositide 3-kinase regulatory subunit 4 (1358 aa).

The N-myristoyl glycine moiety is linked to residue G2. The Protein kinase domain occupies 26–324; the sequence is FEYDKSLGST…AFPEIFYTFL (299 aa). ATP is bound by residues 32 to 40 and K53; that span reads LGSTRFFKV. D148 functions as the Proton acceptor in the catalytic mechanism. HEAT repeat units lie at residues 413-450, 458-495, and 572-610; these read ILLD…LVKE, IYPE…TALR, and KAND…YVGW. S808, S813, S853, and S865 each carry phosphoserine. The segment at 875–898 is disordered; that stretch reads LPKGSDQEVIQTGKPPRSESSAGI. WD repeat units follow at residues 991–1030, 1040–1079, 1093–1134, 1139–1178, 1182–1223, and 1237–1278; these read EHKS…GKTT, RIGG…LPKS, KEDG…NAWT, LKSG…PISS, PSRA…RRFT, and PSPH…RSYV. The segment at 1307–1326 is disordered; sequence KQKVGPSDDTPRRGPESLPV. The span at 1315 to 1326 shows a compositional bias: basic and acidic residues; sequence DTPRRGPESLPV. Position 1316 is a phosphothreonine (T1316). The WD 7 repeat unit spans residues 1327–1358; that stretch reads GHHDIITDVATFQTTQGFIVTASRDGIVKVWK.

Belongs to the protein kinase superfamily. Ser/Thr protein kinase family. As to quaternary structure, component of the PI3K (PI3KC3/PI3K-III/class III phosphatidylinositol 3-kinase) complex the core of which is composed of the catalytic subunit PIK3C3, the regulatory subunit PIK3R4 and BECN1 associating with additional regulatory/auxiliary subunits to form alternative complex forms. Alternative complex forms containing a fourth regulatory subunit in a mutually exclusive manner are PI3K complex I (PI3KC3-C1) containing ATG14, and PI3K complex II (PI3KC3-C2) containing UVRAG. PI3KC3-C1 displays a V-shaped architecture with PIK3R4 serving as a bridge between PIK3C3 and the ATG14:BECN1 subcomplex. Both, PI3KC3-C1 and PI3KC3-C2, can associate with further regulatory subunits, such as RUBCN, SH3GLB1/Bif-1, AMBRA1 and NRBF2. PI3KC3-C1 probably associates with PIK3CB. Interacts with RAB7A in the presence of PIK3C3/VPS34. Interacts with NRBF2. Interacts with ARMC3. Mn(2+) serves as cofactor. Post-translationally, myristoylated. Probably autophosphorylated. In terms of tissue distribution, ubiquitously expressed.

It localises to the late endosome. The protein localises to the cytoplasmic vesicle. The protein resides in the autophagosome. It is found in the membrane. The enzyme catalyses L-seryl-[protein] + ATP = O-phospho-L-seryl-[protein] + ADP + H(+). It catalyses the reaction L-threonyl-[protein] + ATP = O-phospho-L-threonyl-[protein] + ADP + H(+). Regulatory subunit of the PI3K complex that mediates formation of phosphatidylinositol 3-phosphate; different complex forms are believed to play a role in multiple membrane trafficking pathways: PI3KC3-C1 is involved in initiation of autophagosomes and PI3KC3-C2 in maturation of autophagosomes and endocytosis. Involved in regulation of degradative endocytic trafficking and cytokinesis, probably in the context of PI3KC3-C2. The sequence is that of Phosphoinositide 3-kinase regulatory subunit 4 (PIK3R4) from Homo sapiens (Human).